We begin with the raw amino-acid sequence, 231 residues long: MAYRILVVEDDEDIGDLLEESLTRAGYEVLRAKDGKRALQLVNDSLDLVILDIMMPGISGIETCQHIRKSSNVPILFLTARSSTLDKTEGLLAGGDDYMTKPFSEEELHARVIAQLRRYTIYQEKKEQEETFLIGGKLRVSEEFNEVWKEEKQIKLSDLEYRILKLLMNKRNKIFSAQNIYESVWGQPYFYCSNNTVMVHIRKLRSKIEDDPARPVYIKTEWGRGYRFGAS.

Residues 4–116 (RILVVEDDED…ELHARVIAQL (113 aa)) form the Response regulatory domain. At Asp52 the chain carries 4-aspartylphosphate. The ompR/PhoB-type DNA-binding region spans 129–230 (EETFLIGGKL…EWGRGYRFGA (102 aa)).

In terms of processing, phosphorylated by YrkQ.

The protein resides in the cytoplasm. In terms of biological role, member of the two-component regulatory system YrkQ/YrkP. This is an uncharacterized protein from Bacillus subtilis (strain 168).